The sequence spans 139 residues: Putative pre-16S rRNA nuclease (139 aa).

The protein belongs to the YqgF nuclease family.

The protein localises to the cytoplasm. Its function is as follows. Could be a nuclease involved in processing of the 5'-end of pre-16S rRNA. This Streptococcus equi subsp. equi (strain 4047) protein is Putative pre-16S rRNA nuclease.